Here is a 114-residue protein sequence, read N- to C-terminus: Protein ELF4-LIKE 4 (114 aa).

A disordered region spans residues 87–114 (SVDASSEGESSGTLKSDGKANQKRFRSG). Positions 89–100 (DASSEGESSGTL) are enriched in polar residues.

It belongs to the EARLY FLOWERING 4 family. Homodimer.

The protein resides in the nucleus. In terms of biological role, component of the central CCA1/LHY-TOC1 feedback loop in the circadian clock that promotes clock accuracy and is required for sustained rhythms in the absence of daily light/dark cycles. The chain is Protein ELF4-LIKE 4 (EFL4) from Arabidopsis thaliana (Mouse-ear cress).